Reading from the N-terminus, the 357-residue chain is MTKPSILVMAGGTGGHIFPGLAVAEYLRICGWNVSWLGNQSGMEYRLVKSCNFPFEAVEFGGLRGKGIKAKLMLPINLARACHQSWKIMRRLKPNVVLGMGGYITFPGGLISKLLKRPLVLHEANSVAGSANRALAKIAMRTLTGFPNTMENAEWVGNPIRQEFDDIAAPAERYEQRQGPLSLLVVGGSLGAAALNENIPAALALIPLEQRPTVIHQAGDKHLLDLQKRYADLGVLADIRPFIEDMPTAYAQADLVICRSGAMTVSELAACGVASCLIPFPHAIDDHQTANAQFLSDADAAVFLPQKNLNPQDLALMIQNLTRTDLKEMAVRAHALSKPHATQRVAEVCADCAGVGI.

UDP-N-acetyl-alpha-D-glucosamine contacts are provided by residues 13 to 15 (TGG), asparagine 125, arginine 161, serine 189, isoleucine 243, and glutamine 288.

The protein belongs to the glycosyltransferase 28 family. MurG subfamily.

The protein resides in the cell inner membrane. It catalyses the reaction di-trans,octa-cis-undecaprenyl diphospho-N-acetyl-alpha-D-muramoyl-L-alanyl-D-glutamyl-meso-2,6-diaminopimeloyl-D-alanyl-D-alanine + UDP-N-acetyl-alpha-D-glucosamine = di-trans,octa-cis-undecaprenyl diphospho-[N-acetyl-alpha-D-glucosaminyl-(1-&gt;4)]-N-acetyl-alpha-D-muramoyl-L-alanyl-D-glutamyl-meso-2,6-diaminopimeloyl-D-alanyl-D-alanine + UDP + H(+). It participates in cell wall biogenesis; peptidoglycan biosynthesis. In terms of biological role, cell wall formation. Catalyzes the transfer of a GlcNAc subunit on undecaprenyl-pyrophosphoryl-MurNAc-pentapeptide (lipid intermediate I) to form undecaprenyl-pyrophosphoryl-MurNAc-(pentapeptide)GlcNAc (lipid intermediate II). In Polynucleobacter asymbioticus (strain DSM 18221 / CIP 109841 / QLW-P1DMWA-1) (Polynucleobacter necessarius subsp. asymbioticus), this protein is UDP-N-acetylglucosamine--N-acetylmuramyl-(pentapeptide) pyrophosphoryl-undecaprenol N-acetylglucosamine transferase.